The primary structure comprises 717 residues: Adhesion cell surface protein MAD1 (717 aa).

The N-terminal stretch at 1 to 19 (MKSALSVVVAAAGVQQASA) is a signal peptide. Low complexity-rich tracts occupy residues 237–254 (TPVTTLQTYTTPSQQTTT) and 262–274 (SKETTTSAQQTTP). Disordered stretches follow at residues 237–392 (TPVT…ATTT) and 451–506 (RTQS…TPPC). Repeat copies occupy residues 275 to 286 (GKETTPAQQTTP), 287 to 298 (SKETTPVQQTTS), 299 to 310 (GKETTPAQQTTP), 311 to 328 (GKETTSSQETTSAHQTTP), 329 to 340 (GKETTPAQQTTP), 341 to 352 (GKETTPAQQTTP), 353 to 364 (GKETTPAQQTTP), and 365 to 376 (GKETTPAQQTTP). The segment covering 275–366 (GKETTPAQQT…TPAQQTTPGK (92 aa)) has biased composition (polar residues). Low complexity-rich tracts occupy residues 368–392 (TTPAQQTTPGQQTTPSQPTTAATTT) and 484–503 (QPTGEKPNPVTSQPPQSTQT). Residues 481-595 (TPEQPTGEKP…TQIITVTGTP (115 aa)) form the CFEM domain. Intrachain disulfides connect C513-C546, C524-C532, and C534-C568. Residue D529 coordinates heme. N614 carries an N-linked (GlcNAc...) asparagine glycan. The tract at residues 632 to 690 (PTPTGGVPNQPPATASVPAGQNPPPVTGQNPPPAVTDQSPPPAITTGTGGVIPPKPTGS) is disordered. Residues 652–674 (QNPPPVTGQNPPPAVTDQSPPPA) show a composition bias toward pro residues. A695 carries GPI-anchor amidated alanine lipidation. The propeptide at 696 to 717 (GSGRVGAGLGMVLAVAAFVAAL) is removed in mature form.

It belongs to the RBT5 family. The GPI-anchor is attached to the protein in the endoplasmic reticulum and serves to target the protein to the cell surface. There, the glucosamine-inositol phospholipid moiety is cleaved off and the GPI-modified mannoprotein is covalently attached via its lipidless GPI glycan remnant to the 1,6-beta-glucan of the outer cell wall layer.

The protein localises to the secreted. Its subcellular location is the cell wall. The protein resides in the cell membrane. Cell surface adhesion protein that plays a key role in virulence by allowing adherence to the insect host surface. Required to orientate the cytoskeleton and stimulate the expression of genes involved in the cell cycle. Is also involved in achieving the septin hourglass shape and subsequent separation of cells. The sequence is that of Adhesion cell surface protein MAD1 from Metarhizium anisopliae (Entomophthora anisopliae).